The primary structure comprises 846 residues: Rho GTPase-activating protein 17 (846 aa).

The BAR domain occupies 14 to 246 (QTVGRAEKTE…MRAHQDKWAE (233 aa)). One can recognise a Rho-GAP domain in the interval 252-442 (TPLEEHLKRS…PIIQHADWFF (191 aa)). The span at 459–475 (TPNSNHSSHTGNDSDSG) shows a compositional bias: polar residues. A disordered region spans residues 459–482 (TPNSNHSSHTGNDSDSGTLERKRP). Phosphoserine occurs at positions 484 and 575. Residues 519–807 (IAPAFQPPLP…ASRIVTDTNS (289 aa)) are disordered. Residues 592–619 (RNSNQMTTVPNQAQTGGNSHQLSVSTPH) are compositionally biased toward polar residues. Over residues 637–650 (APAPPKPGNLPPGH) the composition is skewed to pro residues. Residues 653-690 (GQSSPGTGTSPKPSARSPSPPQQQQQQQQQQQQQQQQQ) show a composition bias toward low complexity. Serine 698 and serine 700 each carry phosphoserine. 2 stretches are compositionally biased toward pro residues: residues 704–717 (IQAP…PPTQ) and 726–741 (EPGP…PSTP). A phosphothreonine mark is found at threonine 730, threonine 734, and threonine 736. The short motif at 730-743 (TPPQTPTPPSTPPL) is the SH3-binding element. Serine 739 is subject to Phosphoserine. At threonine 740 the chain carries Phosphothreonine. Residues 746–757 (QNPSQSETTQLH) show a composition bias toward polar residues. The span at 772-782 (RPSVPPPPHPP) shows a compositional bias: pro residues. A compositionally biased stretch (polar residues) spans 791–807 (LTSSVPTASRIVTDTNS).

Component of a complex whose core is composed of ARHGAP17, AMOT, PALS1, PATJ and PARD3/PAR3. Interacts with NHERF1, FNBP1, TRIP10, CAPZA (CAPZA1, CAPZA2 or CAPZA3), CAPZB, CD2AP and SH3KBP1/CIN85.

The protein localises to the membrane. It localises to the cytoplasm. The protein resides in the cell junction. Its subcellular location is the tight junction. Its function is as follows. Rho GTPase-activating protein involved in the maintenance of tight junction by regulating the activity of CDC42, thereby playing a central role in apical polarity of epithelial cells. Specifically acts as a GTPase activator for the CDC42 GTPase by converting it to an inactive GDP-bound state. The complex formed with AMOT acts by regulating the uptake of polarity proteins at tight junctions, possibly by deciding whether tight junction transmembrane proteins are recycled back to the plasma membrane or sent elsewhere. Participates in the Ca(2+)-dependent regulation of exocytosis, possibly by catalyzing GTPase activity of Rho family proteins and by inducing the reorganization of the cortical actin filaments. Acts as a GTPase activator in vitro for RAC1. In Mus musculus (Mouse), this protein is Rho GTPase-activating protein 17 (Arhgap17).